A 622-amino-acid polypeptide reads, in one-letter code: 1,4-alpha-glucan branching enzyme GlgB (622 aa).

Catalysis depends on D300, which acts as the Nucleophile. The active-site Proton donor is the E351.

The protein belongs to the glycosyl hydrolase 13 family. GlgB subfamily. In terms of assembly, monomer.

It carries out the reaction Transfers a segment of a (1-&gt;4)-alpha-D-glucan chain to a primary hydroxy group in a similar glucan chain.. The protein operates within glycan biosynthesis; glycogen biosynthesis. Catalyzes the formation of the alpha-1,6-glucosidic linkages in glycogen by scission of a 1,4-alpha-linked oligosaccharide from growing alpha-1,4-glucan chains and the subsequent attachment of the oligosaccharide to the alpha-1,6 position. The protein is 1,4-alpha-glucan branching enzyme GlgB of Streptococcus agalactiae serotype III (strain NEM316).